Reading from the N-terminus, the 466-residue chain is Cysteine--tRNA ligase (466 aa).

Zn(2+) is bound at residue Cys-28. Positions 30–40 (PTVYNYIHIGN) match the 'HIGH' region motif. Residues Cys-208, His-233, and Glu-237 each contribute to the Zn(2+) site. A 'KMSKS' region motif is present at residues 265–269 (KMSKS). Lys-268 contributes to the ATP binding site.

Belongs to the class-I aminoacyl-tRNA synthetase family. As to quaternary structure, monomer. It depends on Zn(2+) as a cofactor.

It is found in the cytoplasm. It catalyses the reaction tRNA(Cys) + L-cysteine + ATP = L-cysteinyl-tRNA(Cys) + AMP + diphosphate. This is Cysteine--tRNA ligase from Staphylococcus saprophyticus subsp. saprophyticus (strain ATCC 15305 / DSM 20229 / NCIMB 8711 / NCTC 7292 / S-41).